Consider the following 239-residue polypeptide: Sugar fermentation stimulation protein homolog (239 aa).

The protein belongs to the SfsA family.

In Synechococcus sp. (strain JA-2-3B'a(2-13)) (Cyanobacteria bacterium Yellowstone B-Prime), this protein is Sugar fermentation stimulation protein homolog.